The following is a 533-amino-acid chain: Glucose-6-phosphate isomerase (533 aa).

Catalysis depends on glutamate 322, which acts as the Proton donor. Active-site residues include histidine 351 and lysine 455.

It belongs to the GPI family.

The protein localises to the cytoplasm. It catalyses the reaction alpha-D-glucose 6-phosphate = beta-D-fructose 6-phosphate. Its pathway is carbohydrate biosynthesis; gluconeogenesis. It participates in carbohydrate degradation; glycolysis; D-glyceraldehyde 3-phosphate and glycerone phosphate from D-glucose: step 2/4. Functionally, catalyzes the reversible isomerization of glucose-6-phosphate to fructose-6-phosphate. This chain is Glucose-6-phosphate isomerase, found in Desulfitobacterium hafniense (strain Y51).